The following is a 567-amino-acid chain: Septation ring formation regulator EzrA (567 aa).

At 1–2 (ME) the chain is on the extracellular side. A helical transmembrane segment spans residues 3-21 (FIIGLIVILLALFSVGYFL). Over 22–567 (RKNIYKEIDR…AQQEKEYQHQ (546 aa)) the chain is Cytoplasmic. Coiled coils occupy residues 108 to 185 (IEDL…YEEE), 243 to 375 (KGYK…RDHV), and 402 to 529 (KGHL…ERRF).

This sequence belongs to the EzrA family.

Its subcellular location is the cell membrane. Functionally, negative regulator of FtsZ ring formation; modulates the frequency and position of FtsZ ring formation. Inhibits FtsZ ring formation at polar sites. Interacts either with FtsZ or with one of its binding partners to promote depolymerization. This chain is Septation ring formation regulator EzrA, found in Bacillus pumilus (strain SAFR-032).